Reading from the N-terminus, the 101-residue chain is Non-histone chromosomal protein HMG-14 (101 aa).

The interval 1 to 101 (MPKRKVSSAE…EAEEKEAKSD (101 aa)) is disordered. Serine 7 carries the post-translational modification ADP-ribosylserine. Serine 8 bears the Phosphoserine mark. The residue at position 14 (lysine 14) is an N6-acetyllysine. Serine 21 is subject to Phosphoserine. ADP-ribosylserine; alternate is present on serine 25. Position 25 is a phosphoserine; alternate (serine 25). Lysine 27 bears the N6-acetyllysine mark. 2 stretches are compositionally biased toward basic and acidic residues: residues 33–51 (VETK…DKKV) and 70–86 (ETKE…KNEE). Threonine 82 bears the Phosphothreonine mark. Residue lysine 83 is modified to N6-acetyllysine. 3 positions are modified to phosphoserine: serine 87, serine 90, and serine 100.

Belongs to the HMGN family. In terms of assembly, interacts with transcriptional regulator SEHBP. In terms of processing, phosphorylation on Ser-21 and Ser-25 weakens binding to nucleosomes and increases the rate of H3 phosphorylation.

It is found in the nucleus. Functionally, binds to the inner side of the nucleosomal DNA thus altering the interaction between the DNA and the histone octamer. May be involved in the process which maintains transcribable genes in a unique chromatin conformation. Inhibits the phosphorylation of nucleosomal histones H3 and H2A by RPS6KA5/MSK1 and RPS6KA3/RSK2. In Bos taurus (Bovine), this protein is Non-histone chromosomal protein HMG-14 (HMGN1).